The primary structure comprises 621 residues: DnaJ homolog subfamily C member 2 (621 aa).

Residue Met-1 is modified to N-acetylmethionine. The tract at residues 23 to 31 (STLCQVEPV) is epitope (recognized by CD8(+) cytotoxic T-lymphocytes). Ser-47, Ser-49, Ser-60, and Ser-63 each carry phosphoserine. One can recognise a J domain in the interval 88–161 (DHYAVLGLGH…VKRRAFNSVD (74 aa)). The tract at residues 160–250 (VDPTFDNSVP…RDERRWIEKQ (91 aa)) is ZRF1-UBD. 2 disordered regions span residues 294-315 (EKKA…QRQA) and 426-453 (KEEA…GSKN). SANT domains are found at residues 449–511 (NGSK…KLDP) and 549–604 (TDFT…EMVK).

Component of ribosome-associated complex (RAC), a heterodimer composed of Hsp70/DnaK-type chaperone HSPA14 and Hsp40/DnaJ-type chaperone DNAJC2. Interacts (via ZRF1-UBD region) with ID1. Post-translationally, phosphorylated in M (mitotic) phase. As to expression, widely expressed.

The protein resides in the nucleus. It is found in the cytoplasm. It localises to the cytosol. In terms of biological role, acts both as a chaperone in the cytosol and as a chromatin regulator in the nucleus. When cytosolic, acts as a molecular chaperone: component of the ribosome-associated complex (RAC), a complex involved in folding or maintaining nascent polypeptides in a folding-competent state. In the RAC complex, stimulates the ATPase activity of the ribosome-associated pool of Hsp70-type chaperones HSPA14 that bind to the nascent polypeptide chain. When nuclear, mediates the switching from polycomb-repressed genes to an active state: specifically recruited at histone H2A ubiquitinated at 'Lys-119' (H2AK119ub), and promotes the displacement of the polycomb PRC1 complex from chromatin, thereby facilitating transcription activation. The chain is DnaJ homolog subfamily C member 2 (DNAJC2) from Homo sapiens (Human).